A 407-amino-acid polypeptide reads, in one-letter code: Multifunctional CCA protein (407 aa).

Residues G8 and R11 each contribute to the ATP site. The CTP site is built by G8 and R11. Positions 21 and 23 each coordinate Mg(2+). The ATP site is built by R91, R137, and R140. CTP contacts are provided by R91, R137, and R140. One can recognise an HD domain in the interval S228 to W329.

This sequence belongs to the tRNA nucleotidyltransferase/poly(A) polymerase family. Bacterial CCA-adding enzyme type 1 subfamily. As to quaternary structure, monomer. Can also form homodimers and oligomers. It depends on Mg(2+) as a cofactor. Ni(2+) serves as cofactor.

It catalyses the reaction a tRNA precursor + 2 CTP + ATP = a tRNA with a 3' CCA end + 3 diphosphate. The enzyme catalyses a tRNA with a 3' CCA end + 2 CTP + ATP = a tRNA with a 3' CCACCA end + 3 diphosphate. Functionally, catalyzes the addition and repair of the essential 3'-terminal CCA sequence in tRNAs without using a nucleic acid template. Adds these three nucleotides in the order of C, C, and A to the tRNA nucleotide-73, using CTP and ATP as substrates and producing inorganic pyrophosphate. tRNA 3'-terminal CCA addition is required both for tRNA processing and repair. Also involved in tRNA surveillance by mediating tandem CCA addition to generate a CCACCA at the 3' terminus of unstable tRNAs. While stable tRNAs receive only 3'-terminal CCA, unstable tRNAs are marked with CCACCA and rapidly degraded. The polypeptide is Multifunctional CCA protein (Aliivibrio fischeri (strain MJ11) (Vibrio fischeri)).